Consider the following 149-residue polypeptide: Thioredoxin-like protein 4B (149 aa).

Belongs to the DIM1 family. As to quaternary structure, homodimer. Interacts with the U5-102 kDa protein subunit of the spliceosome.

The protein resides in the nucleus. In terms of biological role, essential role in pre-mRNA splicing. Required in cell cycle progression for S/G(2) transition. The chain is Thioredoxin-like protein 4B (TXNL4B) from Homo sapiens (Human).